Reading from the N-terminus, the 457-residue chain is Ribosome biogenesis protein YTM1 (457 aa).

A ubiquitin-like (UBL) domain region spans residues 8–89 (VKVKFFTREK…ETTLTVEYTR (82 aa)). Positions 99–457 (NFNNDDWVSA…INKGDNIFKN (359 aa)) are sufficient for interaction with ERB1 and association with 66S pre-ribosomes. WD repeat units lie at residues 101 to 140 (NNDD…EKQY), 142 to 180 (GHTG…GSVS), 203 to 241 (GHKA…MTAI), 282 to 322 (SHTG…CIDT), 324 to 363 (TTSY…SAKI), 370 to 410 (GHKN…PMYT), and 421 to 457 (GVND…IFKN). The segment at 172–191 (TKNDDGSVSNNTGDENDEEN) is disordered.

Belongs to the WD repeat WDR12/YTM1 family. As to quaternary structure, component of the NOP7 complex, composed of ERB1, NOP7 and YTM1. The complex is held together by ERB1, which interacts with NOP7 via its N-terminal domain and with YTM1 via a high-affinity interaction between the seven-bladed beta-propeller domains of the 2 proteins. The NOP7 complex associates with the 66S pre-ribosome. Interacts (via UBL domain) with MDN1 (via VWFA/MIDAS domain).

Its subcellular location is the nucleus. The protein resides in the nucleolus. The protein localises to the nucleoplasm. Component of the NOP7 complex, which is required for maturation of the 25S and 5.8S ribosomal RNAs and formation of the 60S ribosome. In Candida glabrata (strain ATCC 2001 / BCRC 20586 / JCM 3761 / NBRC 0622 / NRRL Y-65 / CBS 138) (Yeast), this protein is Ribosome biogenesis protein YTM1.